Here is a 217-residue protein sequence, read N- to C-terminus: Germin-like protein subfamily 1 member 1 (217 aa).

The signal sequence occupies residues 1–18; the sequence is MILNILLTLTLLMGRVKS. C27 and C45 are joined by a disulfide. The region spanning 59-209 is the Cupin type-1 domain; the sequence is SALSRPGNTK…AYDINGQDVA (151 aa). A glycan (N-linked (GlcNAc...) asparagine) is linked at N75. The Mn(2+) site is built by H108, H110, E115, and H154.

It belongs to the germin family. Oligomer (believed to be a pentamer but probably hexamer).

The protein resides in the secreted. It localises to the extracellular space. Its subcellular location is the apoplast. Functionally, may play a role in plant defense. Probably has no oxalate oxidase activity even if the active site is conserved. In Arabidopsis thaliana (Mouse-ear cress), this protein is Germin-like protein subfamily 1 member 1 (GLP7).